We begin with the raw amino-acid sequence, 199 residues long: uncharacterized protein (199 aa).

Residues 1-41 are disordered; the sequence is MKFKRDENQNSTHHRGNKNNTNNDDDDKEEEEEIINDTTMP. The span at 23–35 shows a compositional bias: acidic residues; that stretch reads NDDDDKEEEEEII. 3 helical membrane passes run 73 to 93, 96 to 116, and 166 to 186; these read LILDLVGFFTQIIPIFGFAFW, ISTYLIFKVYGSGLHLCVSFL, and IAIAVALIAIYKIISYFSPYL.

The protein localises to the membrane. This is an uncharacterized protein from Dictyostelium discoideum (Social amoeba).